Reading from the N-terminus, the 793-residue chain is Netrin-B (793 aa).

Positions 1-22 (MVRATGTRMGLLLPIILALAIG) are cleaved as a signal peptide. One can recognise a Laminin N-terminal domain in the interval 39–303 (KPRKCLPSFV…NLQDNDSADA (265 aa)). N-linked (GlcNAc...) asparagine glycosylation is found at asparagine 103, asparagine 125, and asparagine 298. Positions 332-378 (SVVKRQGKHKGSAYEKHYQSKLAATTPPQQPPKVTPPGKVTPPSTAA) are disordered. Residues 367 to 378 (PPGKVTPPSTAA) show a composition bias toward low complexity. 15 disulfides stabilise this stretch: cysteine 405-cysteine 414, cysteine 407-cysteine 461, cysteine 463-cysteine 472, cysteine 475-cysteine 495, cysteine 498-cysteine 507, cysteine 500-cysteine 525, cysteine 528-cysteine 537, cysteine 540-cysteine 558, cysteine 561-cysteine 573, cysteine 563-cysteine 580, cysteine 582-cysteine 591, cysteine 594-cysteine 608, cysteine 649-cysteine 738, cysteine 652-cysteine 740, and cysteine 665-cysteine 792. Laminin EGF-like domains are found at residues 405 to 497 (CKCN…ECKM), 498 to 560 (CQCN…VCKR), and 561 to 610 (CDCH…PCIK). A disordered region spans residues 420-446 (SGSGTALSDQDDGQDEDTPSAPSLANH). The segment covering 428-437 (DQDDGQDEDT) has biased composition (acidic residues). An NTR domain is found at 649-792 (CGKCKASPKK…KRFQRRARKC (144 aa)). Asparagine 746 carries an N-linked (GlcNAc...) asparagine glycan.

Binds to unc-5 and fra receptors. At 24 hr after puparium formation (APF), detected in the most anterior (oldest) L3, L4 and L5 lamina neurons (at protein level). At 48 hr APF, expressed in all L3, L4 and L5 neurons with slightly higher expression in the L3 neurons (at protein level). At the midline of developing CNS and in different subsets of neurons, muscles, and epidermal patches.

It localises to the secreted. It is found in the extracellular space. The protein localises to the extracellular matrix. The protein resides in the cytoplasm. Its subcellular location is the perinuclear region. Netrins control guidance of CNS commissural axons and peripheral motor axons. Its association with either fra or unc-5 receptors will lead to axon attraction or repulsion, respectively. While short-range repulsion requires both fra and unc-5 receptors, long-range repulsion only requires unc-5. The chain is Netrin-B (NetB) from Drosophila melanogaster (Fruit fly).